The sequence spans 550 residues: Hydroxylamine reductase (550 aa).

The [2Fe-2S] cluster site is built by C3, C6, C18, and C25. Hybrid [4Fe-2O-2S] cluster contacts are provided by H249, E273, C317, C405, C433, C458, E492, and K494. At C405 the chain carries Cysteine persulfide.

The protein belongs to the HCP family. The cofactor is [2Fe-2S] cluster. It depends on hybrid [4Fe-2O-2S] cluster as a cofactor.

It is found in the cytoplasm. The enzyme catalyses A + NH4(+) + H2O = hydroxylamine + AH2 + H(+). Its function is as follows. Catalyzes the reduction of hydroxylamine to form NH(3) and H(2)O. This chain is Hydroxylamine reductase, found in Proteus mirabilis (strain HI4320).